Reading from the N-terminus, the 284-residue chain is Serine protease 57 (284 aa).

The first 35 residues, 1–35, serve as a signal peptide directing secretion; sequence MPSSTAMVPGTRGGWHCLVLTTAAALTQLMWLPGC. In terms of domain architecture, Peptidase S1 spans 40-269; that stretch reads IVGGHEVTPH…FVTWIWDVVR (230 aa). The cysteines at positions 65 and 81 are disulfide-linked. Active-site charge relay system residues include His-80 and Asp-128. An N-linked (GlcNAc...) asparagine glycan is attached at Asn-135. 3 disulfide bridges follow: Cys-163-Cys-230, Cys-194-Cys-208, and Cys-220-Cys-245. Ser-224 functions as the Charge relay system in the catalytic mechanism.

This sequence belongs to the peptidase S1 family. Post-translationally, after cleavage of the signal peptide, the N-terminus is probably further processed by CTSC. Processing by CTSC is probably required for accumulation in cytoplasmic granules; in the absence of CTSC the protein does not accumulate. N-glycosylated.

The protein resides in the cytoplasmic granule lumen. The protein localises to the secreted. Its function is as follows. Serine protease that cleaves preferentially after Arg residues. Can also cleave after citrulline (deimidated arginine) and methylarginine residues. The sequence is that of Serine protease 57 (Prss57) from Mus musculus (Mouse).